Consider the following 117-residue polypeptide: Acrylate reductase cytochrome subunit (117 aa).

The signal sequence occupies residues M1 to A22. Residues H29, C37, C40, H41, C54, C57, H58, H79, H83, C90, C93, H94, H97, C104, C107, and H108 each contribute to the heme c site.

The ArdAB flavocytochrome c is composed of a FAD-containing subunit (ArdA) and a heme c-containing subunit (ArdB). It depends on heme c as a cofactor.

It is found in the periplasm. With respect to regulation, methacrylate acts as a competitive inhibitor of the acrylate reductase activity and suppresses the reductase activity in dose-dependent manner. Its function is as follows. Heme c-containing subunit of the ArdAB flavocytochrome c, which catalyzes the reduction of acrylate to propanoate and supports dimethylsulfoniopropionate-dependent anaerobic respiration. In vitro, can use the artificial electron donor methyl viologen. The natural electron donor is probably a low-potential cytochrome c. Also shows weak activity toward methacrylate in vitro (at a 22-fold lower rate) but cannot use other tested 2-enoates, including crotonic, fumaric, sorbic, urocanic, cinnamic, p-coumaric, caffeic or ferulic acids. The protein catalyzes a unidirectional reaction and cannot oxidize propanoate with phenazine metasulfate and dichlorophenolindophenol as electron acceptors. The sequence is that of Acrylate reductase cytochrome subunit from Shewanella woodyi (strain ATCC 51908 / MS32).